The following is a 784-amino-acid chain: Cyclin-dependent kinase 11B (784 aa).

The span at Q18 to I60 shows a compositional bias: basic and acidic residues. Residues Q18–A401 are disordered. Phosphoserine is present on residues S47 and S72. The segment covering E95 to S113 has biased composition (basic residues). Basic and acidic residues-rich tracts occupy residues H114 to H131, R138 to K227, and P238 to L263. Residue S115 is modified to Phosphoserine. Residue S270 is modified to Phosphoserine. The segment covering S278–G289 has biased composition (low complexity). Composition is skewed to acidic residues over residues S290–E353 and D372–G381. Residues F427–F712 form the Protein kinase domain. Residues I433–V441 and K456 contribute to the ATP site. S471 carries the post-translational modification Phosphoserine; by CDK7. T477 is subject to Phosphothreonine; by CDK7. D551 functions as the Proton acceptor in the catalytic mechanism. S578 is subject to Phosphoserine. Y583 is modified (phosphotyrosine). T584 is subject to Phosphothreonine. A Glycyl lysine isopeptide (Lys-Gly) (interchain with G-Cter in SUMO2) cross-link involves residue K630. A disordered region spans residues S722 to F784. A Phosphothreonine modification is found at T740. S741 carries the post-translational modification Phosphoserine.

This sequence belongs to the protein kinase superfamily. CMGC Ser/Thr protein kinase family. CDC2/CDKX subfamily. In terms of assembly, may interact PAK1 and RANBP9. p110C interacts with RNPS1. Interacts with CCND3. Interacts with CCNL1 and CCNL2. Forms complexes with pre-mRNA-splicing factors, including at least SRSF1, SRSF2 AND SRSF7/SLU7. Mg(2+) serves as cofactor. Post-translationally, phosphorylation at Ser-115 creates a binding site for 14-3-3 proteins.

The enzyme catalyses L-seryl-[protein] + ATP = O-phospho-L-seryl-[protein] + ADP + H(+). It carries out the reaction L-threonyl-[protein] + ATP = O-phospho-L-threonyl-[protein] + ADP + H(+). With respect to regulation, phosphorylation at Thr-437 or Tyr-438 inactivates the enzyme, while phosphorylation at Thr-584 activates it. In terms of biological role, plays multiple roles in cell cycle progression, cytokinesis and apoptosis. Involved in pre-mRNA splicing in a kinase activity-dependent manner. May act as a negative regulator of normal cell cycle progression. In Mus musculus (Mouse), this protein is Cyclin-dependent kinase 11B (Cdk11b).